The sequence spans 234 residues: Enterobactin synthase component D (234 aa).

Residues Asp107, Glu109, and Glu152 each coordinate Mg(2+).

It belongs to the P-Pant transferase superfamily. EntD family. As to quaternary structure, entB, EntD, EntE, and EntF form a multienzyme complex called enterobactin synthase. Mg(2+) serves as cofactor.

The protein localises to the membrane. The enzyme catalyses apo-[aryl-carrier protein] + CoA = holo-[aryl-carrier protein] + adenosine 3',5'-bisphosphate + H(+). The catalysed reaction is apo-[peptidyl-carrier protein] + CoA = holo-[peptidyl-carrier protein] + adenosine 3',5'-bisphosphate + H(+). It participates in siderophore biosynthesis; enterobactin biosynthesis. Its function is as follows. Involved in the biosynthesis of the siderophore enterobactin (enterochelin), which is a macrocyclic trimeric lactone of N-(2,3-dihydroxybenzoyl)-serine. The serine trilactone serves as a scaffolding for the three catechol functionalities that provide hexadentate coordination for the tightly ligated iron(2+) atoms. Plays an essential role in the assembly of the enterobactin by catalyzing the transfer of the 4'-phosphopantetheine (Ppant) moiety from coenzyme A to the apo-domains of both EntB (ArCP domain) and EntF (PCP domain) to yield their holo-forms which make them competent for the activation of 2,3-dihydroxybenzoate (DHB) and L-serine, respectively. The chain is Enterobactin synthase component D from Salmonella typhimurium (strain LT2 / SGSC1412 / ATCC 700720).